The chain runs to 195 residues: Flagellar transcriptional regulator FlhC (195 aa).

Zn(2+) contacts are provided by Cys-137, Cys-140, Cys-157, and Cys-160. Positions 165–195 are disordered; it reads RAGSARRKTTTRKAVAPTHKTTAASRKAVVA.

Belongs to the FlhC family. In terms of assembly, heterohexamer composed of two FlhC and four FlhD subunits. Each FlhC binds a FlhD dimer, forming a heterotrimer, and a hexamer assembles by dimerization of two heterotrimers. Requires Zn(2+) as cofactor.

The protein resides in the cytoplasm. Functionally, functions in complex with FlhD as a master transcriptional regulator that regulates transcription of several flagellar and non-flagellar operons by binding to their promoter region. Activates expression of class 2 flagellar genes, including fliA, which is a flagellum-specific sigma factor that turns on the class 3 genes. Also regulates genes whose products function in a variety of physiological pathways. The protein is Flagellar transcriptional regulator FlhC of Thauera aminoaromatica.